Consider the following 206-residue polypeptide: Large ribosomal subunit protein eL13x (206 aa).

Residues 186–206 (NARHAGARAKRAAEAEKEEKK) are disordered. Residues 196-206 (RAAEAEKEEKK) are compositionally biased toward basic and acidic residues.

It belongs to the eukaryotic ribosomal protein eL13 family.

In Arabidopsis thaliana (Mouse-ear cress), this protein is Large ribosomal subunit protein eL13x (RPL13D).